The following is a 308-amino-acid chain: Serine/threonine-protein phosphatase 4 catalytic subunit (308 aa).

D51, H53, D79, and N111 together coordinate Mn(2+). Catalysis depends on H112, which acts as the Proton donor. Residues H161 and H235 each coordinate Mn(2+). L308 carries the leucine methyl ester modification.

It belongs to the PPP phosphatase family. PP-4 (PP-X) subfamily. Catalytic subunit of the histone H2A phosphatase complex (HTP-C) containing PPH3, PSY2 and PSY4. Mn(2+) serves as cofactor.

The protein localises to the cytoplasm. It localises to the nucleus. It catalyses the reaction O-phospho-L-seryl-[protein] + H2O = L-seryl-[protein] + phosphate. It carries out the reaction O-phospho-L-threonyl-[protein] + H2O = L-threonyl-[protein] + phosphate. In terms of biological role, forms the histone H2A phosphatase complex in association with the regulatory subunits PSY2 and PSY4, which dephosphorylates H2AS128ph (gamma-H2A) that has been displaced from sites of DNA lesions in the double-stranded DNA break repair process. Dephosphorylation is necessary for efficient recovery from the DNA damage checkpoint. The sequence is that of Serine/threonine-protein phosphatase 4 catalytic subunit (PPH3) from Kluyveromyces lactis (strain ATCC 8585 / CBS 2359 / DSM 70799 / NBRC 1267 / NRRL Y-1140 / WM37) (Yeast).